The sequence spans 264 residues: Phosphonates import ATP-binding protein PhnC (264 aa).

An ABC transporter domain is found at 3–246 (IRLQEAGLRH…MLDALYANEQ (244 aa)). 35–42 (GPSGAGKS) lines the ATP pocket.

It belongs to the ABC transporter superfamily. Phosphonates importer (TC 3.A.1.9.1) family. In terms of assembly, the complex is composed of two ATP-binding proteins (PhnC), two transmembrane proteins (PhnE) and a solute-binding protein (PhnD).

It localises to the cell inner membrane. The enzyme catalyses phosphonate(out) + ATP + H2O = phosphonate(in) + ADP + phosphate + H(+). Part of the ABC transporter complex PhnCDE involved in phosphonates import. Responsible for energy coupling to the transport system. The polypeptide is Phosphonates import ATP-binding protein PhnC (Pseudomonas entomophila (strain L48)).